Consider the following 307-residue polypeptide: Recombination-associated protein RdgC (307 aa).

The protein belongs to the RdgC family.

It localises to the cytoplasm. The protein resides in the nucleoid. Functionally, may be involved in recombination. The chain is Recombination-associated protein RdgC from Burkholderia orbicola (strain MC0-3).